The sequence spans 20 residues: Lysozyme (20 aa).

In terms of assembly, monomer.

The protein localises to the secreted. It carries out the reaction Hydrolysis of (1-&gt;4)-beta-linkages between N-acetylmuramic acid and N-acetyl-D-glucosamine residues in a peptidoglycan and between N-acetyl-D-glucosamine residues in chitodextrins.. Its function is as follows. Has bacteriolytic activity. This Lysobacter sp. (strain XL1) protein is Lysozyme.